A 527-amino-acid polypeptide reads, in one-letter code: Peptide chain release factor 3 (527 aa).

The region spanning 9-277 (AKRRTFAIIS…AVVDWAPLPL (269 aa)) is the tr-type G domain. Residues 18 to 25 (SHPDAGKT), 86 to 90 (DTPGH), and 140 to 143 (NKLD) each bind GTP.

This sequence belongs to the TRAFAC class translation factor GTPase superfamily. Classic translation factor GTPase family. PrfC subfamily.

It is found in the cytoplasm. In terms of biological role, increases the formation of ribosomal termination complexes and stimulates activities of RF-1 and RF-2. It binds guanine nucleotides and has strong preference for UGA stop codons. It may interact directly with the ribosome. The stimulation of RF-1 and RF-2 is significantly reduced by GTP and GDP, but not by GMP. The chain is Peptide chain release factor 3 from Pseudomonas fluorescens (strain ATCC BAA-477 / NRRL B-23932 / Pf-5).